A 362-amino-acid polypeptide reads, in one-letter code: S-adenosylmethionine:tRNA ribosyltransferase-isomerase (362 aa).

Belongs to the QueA family. Monomer.

The protein resides in the cytoplasm. It catalyses the reaction 7-aminomethyl-7-carbaguanosine(34) in tRNA + S-adenosyl-L-methionine = epoxyqueuosine(34) in tRNA + adenine + L-methionine + 2 H(+). The protein operates within tRNA modification; tRNA-queuosine biosynthesis. Functionally, transfers and isomerizes the ribose moiety from AdoMet to the 7-aminomethyl group of 7-deazaguanine (preQ1-tRNA) to give epoxyqueuosine (oQ-tRNA). The sequence is that of S-adenosylmethionine:tRNA ribosyltransferase-isomerase from Methylobacterium sp. (strain 4-46).